Reading from the N-terminus, the 668-residue chain is DNA ligase (668 aa).

NAD(+) contacts are provided by residues 35–39 and 83–84; these read DKEYD and SL. Lys125 acts as the N6-AMP-lysine intermediate in catalysis. NAD(+) is bound by residues Arg147, Glu181, and Lys317. Zn(2+) is bound by residues Cys410, Cys413, Cys426, and Cys432. The BRCT domain maps to 591-668; the sequence is KKDNKFNGKT…TEEEFNEMIN (78 aa).

It belongs to the NAD-dependent DNA ligase family. LigA subfamily. Requires Mg(2+) as cofactor. Mn(2+) serves as cofactor.

It catalyses the reaction NAD(+) + (deoxyribonucleotide)n-3'-hydroxyl + 5'-phospho-(deoxyribonucleotide)m = (deoxyribonucleotide)n+m + AMP + beta-nicotinamide D-nucleotide.. In terms of biological role, DNA ligase that catalyzes the formation of phosphodiester linkages between 5'-phosphoryl and 3'-hydroxyl groups in double-stranded DNA using NAD as a coenzyme and as the energy source for the reaction. It is essential for DNA replication and repair of damaged DNA. In Clostridium tetani (strain Massachusetts / E88), this protein is DNA ligase.